Consider the following 314-residue polypeptide: Cell division protein FtsQ (314 aa).

2 stretches are compositionally biased toward basic and acidic residues: residues 1-15 (MTEHNEDPQIERVAD) and 30-57 (ESKDEPAEHPEFEGPRRRARRERAERRA). The interval 1-57 (MTEHNEDPQIERVADDAADEEAVTEPLATESKDEPAEHPEFEGPRRRARRERAERRA) is disordered. The Cytoplasmic portion of the chain corresponds to 1–99 (MTEHNEDPQI…AARGVVRGLK (99 aa)). The helical transmembrane segment at 100-120 (ALLATVVLAVVGIGLGLALYF) threads the bilayer. Over 121-314 (TPAMSAREIV…VSSPDLPTVK (194 aa)) the chain is Extracellular. In terms of domain architecture, POTRA spans 124 to 192 (MSAREIVIIG…SALRITIVER (69 aa)).

It belongs to the FtsQ/DivIB family. FtsQ subfamily.

It is found in the cell membrane. In terms of biological role, essential cell division protein. In Mycobacterium bovis (strain ATCC BAA-935 / AF2122/97), this protein is Cell division protein FtsQ.